The primary structure comprises 2242 residues: Large tegument protein deneddylase (2242 aa).

The deubiquitination activity stretch occupies residues 1–238 (MKVTQASCHQ…IDLTGVVRES (238 aa)). The 223-residue stretch at 4–226 (TQASCHQGDI…AARLVSTYRD (223 aa)) folds into the Peptidase C76 domain. Active-site residues include cysteine 24, aspartate 160, and histidine 162. Residues 239-318 (ADTAATTTTA…KTLATASSSS (80 aa)) form a disordered region. The span at 240–250 (DTAATTTTAAP) shows a compositional bias: low complexity. Residues 251–268 (SLPPLPDPIVDPGCPPGV) show a composition bias toward pro residues. Residues 304–318 (PSTTSKTLATASSSS) are compositionally biased toward low complexity. Residues 328-332 (SSAVP) form an interaction with inner tegument protein region. The span at 1173 to 1190 (SQQKMEGQLQETRQQMTE) shows a compositional bias: polar residues. Positions 1173–1229 (SQQKMEGQLQETRQQMTETSERLDRSLRQDPGSSSVTRVPEKPFKGQELAGRITPPP) are disordered. Positions 1191–1200 (TSERLDRSLR) are enriched in basic and acidic residues.

The protein belongs to the herpesviridae large tegument protein family. As to quaternary structure, interacts with host CUL1 and CUL4A; these interactions inhibit the E3 ligase activity of cullins. Interacts with inner tegument protein. Interacts with capsid vertex specific component CVC2. Interacts with the major capsid protein/MCP.

It is found in the virion tegument. It localises to the host cytoplasm. The protein resides in the host nucleus. It catalyses the reaction Thiol-dependent hydrolysis of ester, thioester, amide, peptide and isopeptide bonds formed by the C-terminal Gly of ubiquitin (a 76-residue protein attached to proteins as an intracellular targeting signal).. Its function is as follows. Large tegument protein that plays multiple roles in the viral cycle. During viral entry, remains associated with the capsid while most of the tegument is detached and participates in the capsid transport toward the host nucleus. Plays a role in the routing of the capsid at the nuclear pore complex and subsequent uncoating. Within the host nucleus, acts as a deneddylase and promotes the degradation of nuclear CRLs (cullin-RING ubiquitin ligases) and thereby stabilizes nuclear CRL substrates, while cytoplasmic CRLs remain unaffected. These modifications prevent host cell cycle S-phase progression and create a favorable environment allowing efficient viral genome replication. Participates later in the secondary envelopment of capsids. Indeed, plays a linker role for the association of the outer viral tegument to the capsids together with the inner tegument protein. The polypeptide is Large tegument protein deneddylase (Homo sapiens (Human)).